The sequence spans 269 residues: Putative pyruvate, phosphate dikinase regulatory protein (269 aa).

147 to 154 (GVSRTSKT) serves as a coordination point for ADP.

This sequence belongs to the pyruvate, phosphate/water dikinase regulatory protein family. PDRP subfamily.

The enzyme catalyses N(tele)-phospho-L-histidyl/L-threonyl-[pyruvate, phosphate dikinase] + ADP = N(tele)-phospho-L-histidyl/O-phospho-L-threonyl-[pyruvate, phosphate dikinase] + AMP + H(+). It carries out the reaction N(tele)-phospho-L-histidyl/O-phospho-L-threonyl-[pyruvate, phosphate dikinase] + phosphate + H(+) = N(tele)-phospho-L-histidyl/L-threonyl-[pyruvate, phosphate dikinase] + diphosphate. Functionally, bifunctional serine/threonine kinase and phosphorylase involved in the regulation of the pyruvate, phosphate dikinase (PPDK) by catalyzing its phosphorylation/dephosphorylation. The polypeptide is Putative pyruvate, phosphate dikinase regulatory protein (Geotalea daltonii (strain DSM 22248 / JCM 15807 / FRC-32) (Geobacter daltonii)).